The primary structure comprises 261 residues: MTQKERRIFLIEYLLRENPNYHGVQIPDDEDEQKILLRSLMNVRPPQHTSKEFLRIQDNYLQEAIRQHGITGLADLKPVTGRGNGDWYVWRGDITTLKVDAIVNAANSGMTGCWQPCHACIDNCIHTFAGVQLRTVCAGIMQEQGHEEPTGTAKITPAFNLPCKYVLHTVGPIISGQLTDRDCTLLANSYTSCLNLAAENGVKSIAFCCISTGVFRFPAQKAAEIAVATVEDWKAKNNSAMKIVFNVFSEKDEALYNKLMS.

In terms of domain architecture, Macro spans 74 to 261 (ADLKPVTGRG…DEALYNKLMS (188 aa)). ADP-D-ribose is bound by residues aspartate 93, isoleucine 94, and asparagine 107. Cysteine 113, histidine 118, and cysteine 120 together coordinate Zn(2+). Positions 120, 121, 122, 211, 212, 213, and 215 each coordinate ADP-D-ribose.

It belongs to the MacroD-type family. Zn-Macro subfamily. Zn(2+) is required as a cofactor.

It carries out the reaction 4-O-(ADP-D-ribosyl)-L-aspartyl-[protein] + H2O = L-aspartyl-[protein] + ADP-D-ribose + H(+). Functionally, ADP-ribosylhydrolase that specifically reverses the SirTM-mediated mono-ADP-ribosylation at an asparatate residue of GcvH-L, by releasing ADP-ribose from the target protein. May play a role in the regulation of the response to host-induced oxidative stress. This is Protein-ADP-ribose hydrolase from Treponema medium.